We begin with the raw amino-acid sequence, 542 residues long: Chaperonin GroEL (542 aa).

ATP-binding positions include 29 to 32, K50, 86 to 90, G414, 477 to 479, and D493; these read TMGP, DGTTT, and NAA.

It belongs to the chaperonin (HSP60) family. Forms a cylinder of 14 subunits composed of two heptameric rings stacked back-to-back. Interacts with the co-chaperonin GroES.

Its subcellular location is the cytoplasm. It carries out the reaction ATP + H2O + a folded polypeptide = ADP + phosphate + an unfolded polypeptide.. Its function is as follows. Together with its co-chaperonin GroES, plays an essential role in assisting protein folding. The GroEL-GroES system forms a nano-cage that allows encapsulation of the non-native substrate proteins and provides a physical environment optimized to promote and accelerate protein folding. The polypeptide is Chaperonin GroEL (Sulfurimonas denitrificans (strain ATCC 33889 / DSM 1251) (Thiomicrospira denitrificans (strain ATCC 33889 / DSM 1251))).